The following is a 439-amino-acid chain: Iron-sulfur cluster assembly factor IBA57 homolog, mitochondrial (439 aa).

The N-terminal 72 residues, 1–72 (MQPATRSIAV…RLISVSGPDA (72 aa)), are a transit peptide targeting the mitochondrion.

It belongs to the GcvT family. CAF17/IBA57 subfamily.

The protein resides in the mitochondrion matrix. This chain is Iron-sulfur cluster assembly factor IBA57 homolog, mitochondrial (caf-17), found in Neurospora crassa (strain ATCC 24698 / 74-OR23-1A / CBS 708.71 / DSM 1257 / FGSC 987).